The following is a 38-amino-acid chain: Photosystem II reaction center protein L (38 aa).

Residues 17–37 traverse the membrane as a helical segment; that stretch reads SLYWGLLLIFVLAVLFSSYIF.

Belongs to the PsbL family. PSII is composed of 1 copy each of membrane proteins PsbA, PsbB, PsbC, PsbD, PsbE, PsbF, PsbH, PsbI, PsbJ, PsbK, PsbL, PsbM, PsbT, PsbX, PsbY, PsbZ, Psb30/Ycf12, at least 3 peripheral proteins of the oxygen-evolving complex and a large number of cofactors. It forms dimeric complexes.

Its subcellular location is the plastid. The protein localises to the chloroplast thylakoid membrane. Functionally, one of the components of the core complex of photosystem II (PSII). PSII is a light-driven water:plastoquinone oxidoreductase that uses light energy to abstract electrons from H(2)O, generating O(2) and a proton gradient subsequently used for ATP formation. It consists of a core antenna complex that captures photons, and an electron transfer chain that converts photonic excitation into a charge separation. This subunit is found at the monomer-monomer interface and is required for correct PSII assembly and/or dimerization. This Ostreococcus tauri protein is Photosystem II reaction center protein L.